Reading from the N-terminus, the 225-residue chain is Protein-disulfide oxidoreductase DsbI (225 aa).

The chain crosses the membrane as a helical span at residues 27–47 (FLWLLMAIAMGGLIILAHSFF). A disulfide bond links Cys-56 and Cys-59. Helical transmembrane passes span 65–85 (AMFVMVIGGVIAAINPKNIVL) and 87–107 (LIGCIAAFYGSIMGIKFSIKL). Cys-128 and Cys-154 are joined by a disulfide. Residues 199-219 (CMLAFGLCLILLLVMSGAWAL) traverse the membrane as a helical segment.

It belongs to the DsbB family. DsbI subfamily. In terms of assembly, interacts with DsbL.

It localises to the cell inner membrane. In terms of biological role, required for disulfide bond formation in some proteins. Part of a redox system composed of DsbI and DsbL that mediates formation of an essential disulfide bond in AssT. This is Protein-disulfide oxidoreductase DsbI from Salmonella choleraesuis (strain SC-B67).